Here is a 226-residue protein sequence, read N- to C-terminus: V-type proton ATPase subunit E (226 aa).

It belongs to the V-ATPase E subunit family. As to quaternary structure, V-ATPase is a heteromultimeric enzyme composed of a peripheral catalytic V1 complex (components A to H) attached to an integral membrane V0 proton pore complex (components: a, c, c', c'' and d).

Subunit of the peripheral V1 complex of vacuolar ATPase essential for assembly or catalytic function. V-ATPase is responsible for acidifying a variety of intracellular compartments in eukaryotic cells. The sequence is that of V-type proton ATPase subunit E (VATE) from Mesembryanthemum crystallinum (Common ice plant).